Here is a 300-residue protein sequence, read N- to C-terminus: Probable alpha-L-glutamate ligase (300 aa).

The 184-residue stretch at 104 to 287 folds into the ATP-grasp domain; the sequence is LQLLARQGID…IAGRMIEYIE (184 aa). Residues Lys141, 178–179, Asp187, and 211–213 contribute to the ATP site; these read EY and RSN. Mg(2+)-binding residues include Asp248, Glu260, and Asn262. Residues Asp248, Glu260, and Asn262 each coordinate Mn(2+).

This sequence belongs to the RimK family. Mg(2+) serves as cofactor. It depends on Mn(2+) as a cofactor.

The chain is Probable alpha-L-glutamate ligase from Serratia proteamaculans (strain 568).